The primary structure comprises 556 residues: PTS system fructose-specific EIIB'BC component (556 aa).

2 PTS EIIB type-2 domains span residues 1–85 and 106–201; these read MKLF…LANG and IVAV…KAFK. The active-site Phosphocysteine intermediate; for EIIB activity is the cysteine 112. Cysteine 112 is modified (phosphocysteine; by EIIA). The PTS EIIC type-2 domain occupies 224–556; the sequence is VYKHLMTGVS…AIIKSKNNAE (333 aa). The next 10 helical transmembrane spans lie at 237–257, 275–295, 302–322, 324–344, 349–369, 390–410, 431–451, 468–488, 490–510, and 529–549; these read PLVV…FNVI, SGVA…FSIA, VGLI…GGII, GFLA…PASL, PILI…IYLI, VNAI…MGGP, MAAA…ATWI, FVLG…ADPI, VIIS…GLNI, and LKYL…YAII.

It localises to the cell inner membrane. It carries out the reaction D-fructose(out) + N(pros)-phospho-L-histidyl-[protein] = D-fructose 1-phosphate(in) + L-histidyl-[protein]. The phosphoenolpyruvate-dependent sugar phosphotransferase system (sugar PTS), a major carbohydrate active transport system, catalyzes the phosphorylation of incoming sugar substrates concomitantly with their translocation across the cell membrane. The enzyme II FruAB PTS system is involved in fructose transport. This chain is PTS system fructose-specific EIIB'BC component, found in Haemophilus influenzae (strain ATCC 51907 / DSM 11121 / KW20 / Rd).